A 410-amino-acid polypeptide reads, in one-letter code: Serine hydroxymethyltransferase (410 aa).

(6S)-5,6,7,8-tetrahydrofolate is bound by residues leucine 116 and 120–122 (GHL). Position 225 is an N6-(pyridoxal phosphate)lysine (lysine 225). 349 to 351 (SPF) is a (6S)-5,6,7,8-tetrahydrofolate binding site.

The protein belongs to the SHMT family. As to quaternary structure, homodimer. The cofactor is pyridoxal 5'-phosphate.

The protein localises to the cytoplasm. It carries out the reaction (6R)-5,10-methylene-5,6,7,8-tetrahydrofolate + glycine + H2O = (6S)-5,6,7,8-tetrahydrofolate + L-serine. Its pathway is one-carbon metabolism; tetrahydrofolate interconversion. It functions in the pathway amino-acid biosynthesis; glycine biosynthesis; glycine from L-serine: step 1/1. Its function is as follows. Catalyzes the reversible interconversion of serine and glycine with tetrahydrofolate (THF) serving as the one-carbon carrier. This reaction serves as the major source of one-carbon groups required for the biosynthesis of purines, thymidylate, methionine, and other important biomolecules. Also exhibits THF-independent aldolase activity toward beta-hydroxyamino acids, producing glycine and aldehydes, via a retro-aldol mechanism. The sequence is that of Serine hydroxymethyltransferase from Leuconostoc citreum (strain KM20).